Here is a 336-residue protein sequence, read N- to C-terminus: Phytochrome A-associated F-box protein (336 aa).

In terms of domain architecture, F-box spans 3–55; the sequence is ESVFSCIPEDVVFNIFFKLQDDPRNWARLACVCTKFSSIVRNVCCKTQCYSAI. The short motif at 197-201 is the Nuclear localization signal element; that stretch reads RKRRK.

As to quaternary structure, probable component of an E3 ubiquitin ligase SCF complex. Interacts with SKP1A/ASK1 and SKP1B/ASK2.

It localises to the nucleus. It functions in the pathway protein modification; protein ubiquitination. Component of SCF(ASK-cullin-F-box) E3 ubiquitin ligase complexes, which may mediate the ubiquitination and subsequent proteasomal degradation of target proteins. Negative regulator of the phyA signaling pathway that shifts the responsiveness of the phyA signaling system associated with hypocotyl elongation from red to far-red wavelength. The polypeptide is Phytochrome A-associated F-box protein (EID1) (Arabidopsis thaliana (Mouse-ear cress)).